We begin with the raw amino-acid sequence, 301 residues long: G-protein coupled receptor homolog U51 (301 aa).

Residues 1-15 (MEKETKSLAWPATAE) are Extracellular-facing. A helical transmembrane segment spans residues 16 to 36 (FYGWVFIFSSIQLCTVVFLTV). At 37–48 (RFNGFKVGREYA) the chain is on the cytoplasmic side. A helical transmembrane segment spans residues 49 to 69 (VFTFAGMSFNCFLLPIKMGLL). The Extracellular portion of the chain corresponds to 70–82 (SGHWTLPRDFCAI). Residues 83–103 (LLYIDDFSAYFSSWSLVFMAI) form a helical membrane-spanning segment. Residues 104–122 (ERINYFCYSTPLLNENSKA) are Cytoplasmic-facing. The chain crosses the membrane as a helical span at residues 123–143 (LAKVCFPIVWVVSGVQALQML). Residues 144 to 168 (NNYKATALQNETGQCFLAFLRSGHD) are Extracellular-facing. Residue Asn153 is glycosylated (N-linked (GlcNAc...) asparagine; by host). The helical transmembrane segment at 169 to 189 (MWLMLVYSVVIPVMLVFFYLY) threads the bilayer. Residues 190–199 (SKNFMLLKDE) lie on the Cytoplasmic side of the membrane. A helical transmembrane segment spans residues 200–220 (LSSVTTYLCIYLLLGTIAHLP). The Extracellular segment spans residues 221 to 238 (KAALSEIESDKIFYGLRD). Residues 239–259 (IFMALPVLKVYYISAMAYCMA) form a helical membrane-spanning segment. Residues 260-301 (CDDHTVPVRLCSIWLVNLCKKCFSCTRREKGSDLEVGIKMLK) lie on the Cytoplasmic side of the membrane.

The protein belongs to the G-protein coupled receptor 1 family.

It localises to the host cell membrane. This Homo sapiens (Human) protein is G-protein coupled receptor homolog U51 (U51).